The chain runs to 307 residues: MDAIRIERLSKTFPNGRKGLEDIDLAIAPGEMVALIGASGSGKSTLLRQIASFSSSDARPSRIDIFGRSIQRDGRIARDVRRMRRDIGFVFQQFNLVDRLSVETNVLIGALARVPMWRRLAGRFSRADRALAAQALGEVGIAEHARERAANLSGGQQQRAALARALVQRARIILADEPIASLDPAASRRVMEMLRALNANHRLTVLVSLHQIDVALRFCPRVVALRAGRIVYDGPSAALTRERLHALYGDDAHLPFAVGDEVRPAAREAAGEPARRAPAAFDSAGSPDLPDSQPASPRRMLAASSMR.

The ABC transporter domain maps to 4 to 252; sequence IRIERLSKTF…RLHALYGDDA (249 aa). 37 to 44 lines the ATP pocket; the sequence is GASGSGKS. Residues 265-275 are compositionally biased toward basic and acidic residues; the sequence is AAREAAGEPAR. A disordered region spans residues 265–307; the sequence is AAREAAGEPARRAPAAFDSAGSPDLPDSQPASPRRMLAASSMR.

It belongs to the ABC transporter superfamily. Phosphonates importer (TC 3.A.1.9.1) family. In terms of assembly, the complex is composed of two ATP-binding proteins (PhnC), two transmembrane proteins (PhnE) and a solute-binding protein (PhnD).

It localises to the cell inner membrane. It catalyses the reaction phosphonate(out) + ATP + H2O = phosphonate(in) + ADP + phosphate + H(+). Its function is as follows. Part of the ABC transporter complex PhnCDE involved in phosphonates import. Responsible for energy coupling to the transport system. This Burkholderia pseudomallei (strain 1710b) protein is Phosphonates import ATP-binding protein PhnC.